The primary structure comprises 124 residues: Ribonuclease pancreatic (124 aa).

2 residues coordinate substrate: Lys7 and Arg10. Catalysis depends on His12, which acts as the Proton acceptor. 4 cysteine pairs are disulfide-bonded: Cys26–Cys84, Cys40–Cys95, Cys58–Cys110, and Cys65–Cys72. Residue Asn34 is glycosylated (N-linked (GlcNAc...) asparagine). Substrate is bound by residues 41 to 45, Lys66, and Arg85; that span reads KPVNT. The Proton donor role is filled by His119.

Belongs to the pancreatic ribonuclease family. As to quaternary structure, monomer. Interacts with and forms tight 1:1 complexes with RNH1. Dimerization of two such complexes may occur. Interaction with RNH1 inhibits this protein. In terms of tissue distribution, pancreas.

Its subcellular location is the secreted. It catalyses the reaction an [RNA] containing cytidine + H2O = an [RNA]-3'-cytidine-3'-phosphate + a 5'-hydroxy-ribonucleotide-3'-[RNA].. The enzyme catalyses an [RNA] containing uridine + H2O = an [RNA]-3'-uridine-3'-phosphate + a 5'-hydroxy-ribonucleotide-3'-[RNA].. Endonuclease that catalyzes the cleavage of RNA on the 3' side of pyrimidine nucleotides. Acts on single-stranded and double-stranded RNA. The polypeptide is Ribonuclease pancreatic (RNASE1) (Eudorcas thomsonii (Thomson's gazelle)).